Reading from the N-terminus, the 406-residue chain is MIVLVVNSGSSSIKYQLLDMDNEKVLCKGLAERIGIPGSRIVHKKAGEKFIVEKPMPNHDEALKIVLEVLKDEKLGAIKDFKEIDAVGHRVVHGGEKFSGSVLIDDEVIKAIEEFSYLAPLHNPPNLMGIKAIMKLLPGVPNIGVFDTAFHAKMPEKAYLYAIPYEFYEKYKIRRYGFHGTSHRYVSKRTAEILGLDYNKAKIVTVHLGNGASIAAVKNGKSVDTSMGFTPLEGLVMGTRSGDLDPSIVTFLMEKEGLSAEEVYTILNKKSGVLGLSKNFSSDMRDIEDKALENDPLCRLVLDIYEYRIAKYIGAYAAAMNGVDAISFTAGVGENSPITREEICVNYLSFLGIKIDKEKNNVKGEERIISTPDSKVKVLVVPTNEELMIARDTKEIIEKGLKQLEY.

Position 7 (Asn7) interacts with Mg(2+). Lys14 contributes to the ATP binding site. Arg90 is a substrate binding site. The active-site Proton donor/acceptor is the Asp147. ATP contacts are provided by residues 207–211 (HLGNG), 283–285 (DMR), and 331–335 (GVGEN). Glu385 provides a ligand contact to Mg(2+).

It belongs to the acetokinase family. In terms of assembly, homodimer. Requires Mg(2+) as cofactor. Mn(2+) is required as a cofactor.

It is found in the cytoplasm. The enzyme catalyses acetate + ATP = acetyl phosphate + ADP. The protein operates within metabolic intermediate biosynthesis; acetyl-CoA biosynthesis; acetyl-CoA from acetate: step 1/2. Its function is as follows. Catalyzes the formation of acetyl phosphate from acetate and ATP. Can also catalyze the reverse reaction. The polypeptide is Acetate kinase (Thermosipho melanesiensis (strain DSM 12029 / CIP 104789 / BI429)).